The sequence spans 337 residues: Transaldolase (337 aa).

Positions 1 to 10 (MSGSPVKRQR) match the Nuclear localization signal motif. N6-acetyllysine is present on Lys-115. The active-site Schiff-base intermediate with substrate is the Lys-142. An N6-acetyllysine modification is found at Lys-219. Phosphoserine occurs at positions 237 and 256. N6-acetyllysine is present on residues Lys-269, Lys-286, and Lys-321.

This sequence belongs to the transaldolase family. Type 1 subfamily. Homodimer. Interacts with KPNA1 and KPNA4.

Its subcellular location is the nucleus. It is found in the cytoplasm. It catalyses the reaction D-sedoheptulose 7-phosphate + D-glyceraldehyde 3-phosphate = D-erythrose 4-phosphate + beta-D-fructose 6-phosphate. The protein operates within carbohydrate degradation; pentose phosphate pathway; D-glyceraldehyde 3-phosphate and beta-D-fructose 6-phosphate from D-ribose 5-phosphate and D-xylulose 5-phosphate (non-oxidative stage): step 2/3. Functionally, catalyzes the rate-limiting step of the non-oxidative phase in the pentose phosphate pathway. Catalyzes the reversible conversion of sedheptulose-7-phosphate and D-glyceraldehyde 3-phosphate into erythrose-4-phosphate and beta-D-fructose 6-phosphate. The polypeptide is Transaldolase (Taldo1) (Rattus norvegicus (Rat)).